Reading from the N-terminus, the 188-residue chain is FMN-dependent NADPH-azoreductase (188 aa).

This sequence belongs to the azoreductase type 2 family. Homotetramer. FMN is required as a cofactor.

Catalyzes the reductive cleavage of azo bond in aromatic azo compounds to the corresponding amines. Requires NADPH, but not NADH, as an electron donor for its activity. The sequence is that of FMN-dependent NADPH-azoreductase (azo1) from Staphylococcus saprophyticus subsp. saprophyticus (strain ATCC 15305 / DSM 20229 / NCIMB 8711 / NCTC 7292 / S-41).